We begin with the raw amino-acid sequence, 351 residues long: Rod outer segment membrane protein 1 (351 aa).

Topologically, residues 1-19 are cytoplasmic; that stretch reads MAPVLPLVLPLQPRIRLAQ. A helical transmembrane segment spans residues 20–43; that stretch reads GLWLLSWLLVLVGGLTLLCSGHLL. At 44-64 the chain is on the lumenal side; that stretch reads VQLWHLGTFLAPSCPFSALPQ. The chain crosses the membrane as a helical span at residues 65–84; sequence VALAASAVALGTGLVGSGAS. At 85 to 102 the chain is on the cytoplasmic side; that stretch reads RASLDAEQYPPWRGVLGP. Residues 103–125 form a helical membrane-spanning segment; sequence LLVAGTAGGGGLLVLALGLALAL. Residues 126–264 lie on the Lumenal side of the membrane; that stretch reads PGTLDTGLEE…EVLLGHLQGL (139 aa). A helical membrane pass occupies residues 265–286; it reads ASTLGNMLAVTFLLQTLVLLGL. Residues 287–351 are Cytoplasmic-facing; it reads RYLQTALEGL…KPPKECLPEA (65 aa). Residues 325–351 form a disordered region; sequence QGAGPHRPAPGETPPEEKPPKECLPEA. Basic and acidic residues predominate over residues 339–351; that stretch reads PEEKPPKECLPEA.

This sequence belongs to the PRPH2/ROM1 family. As to quaternary structure, homodimer; disulfide-linked. Forms a homotetramer. Forms a heterotetramer with PRPH2. Homotetramer and heterotetramer core complexes go on to form higher order complexes by formation of intermolecular disulfide bonds. Interacts with STX3. Interacts with SNAP25. As to expression, retina photoreceptor (at protein level). In rim region of ROS disks (at protein level).

It localises to the photoreceptor inner segment membrane. The protein resides in the photoreceptor outer segment membrane. Plays a role in rod outer segment (ROS) morphogenesis. May play a role with PRPH2 in the maintenance of the structure of ROS curved disks. Plays a role in the organization of the ROS and maintenance of ROS disk diameter. Involved in the maintenance of the retina outer nuclear layer. This is Rod outer segment membrane protein 1 (ROM1) from Bos taurus (Bovine).